The chain runs to 247 residues: tRNA pseudouridine synthase A (247 aa).

The active-site Nucleophile is D52. Y113 is a substrate binding site.

This sequence belongs to the tRNA pseudouridine synthase TruA family. As to quaternary structure, homodimer.

It carries out the reaction uridine(38/39/40) in tRNA = pseudouridine(38/39/40) in tRNA. Functionally, formation of pseudouridine at positions 38, 39 and 40 in the anticodon stem and loop of transfer RNAs. The protein is tRNA pseudouridine synthase A of Sinorhizobium medicae (strain WSM419) (Ensifer medicae).